Reading from the N-terminus, the 326-residue chain is MKLYPWLIKPYNNIVQQYQKKKAHHAILIKTPRGIGVSLLIWFISKWLLCLKPIGLNSCDKCHGCKLMSANNHPDWHNFTPEKNNLFSIESVRIINEKIFTCSRQGGSKIIFLSDTGKLTESAINAFLKTLEEPPRKTWFFLVNYKNLNSHSTLNSRCLIYKLFIPEEKKSLYWLKKETVKKNRSCLTALRINQGSPLYAKKFINSNLWIDRINFYECLHDSFKKNNLLKILPLITEKDSQVKIDWICFLLFDSIKFYFNENDNLTNSDQIELIQFFSYNYKNTILDTSIRTWLHCKYRLSNISGINCELLLSEQLLIWEKILNFS.

As to quaternary structure, DNA polymerase III contains a core (composed of alpha, epsilon and theta chains) that associates with a tau subunit. This core dimerizes to form the POLIII' complex. PolIII' associates with the gamma complex (composed of gamma, delta, delta', psi and chi chains) and with the beta chain to form the complete DNA polymerase III complex.

It catalyses the reaction DNA(n) + a 2'-deoxyribonucleoside 5'-triphosphate = DNA(n+1) + diphosphate. In terms of biological role, DNA polymerase III is a complex, multichain enzyme responsible for most of the replicative synthesis in bacteria. This DNA polymerase also exhibits 3' to 5' exonuclease activity. This Buchnera aphidicola subsp. Acyrthosiphon pisum (strain APS) (Acyrthosiphon pisum symbiotic bacterium) protein is DNA polymerase III subunit delta' (holB).